We begin with the raw amino-acid sequence, 80 residues long: Raniseptin-7 (80 aa).

Positions Met1–Cys22 are cleaved as a signal peptide. Positions Glu23 to Glu49 are excised as a propeptide. The segment at Arg27–Glu46 is disordered. A compositionally biased stretch (acidic residues) spans Glu30–Glu44.

Belongs to the frog skin active peptide (FSAP) family. Dermaseptin subfamily. Expressed by the skin glands.

The protein localises to the secreted. In terms of biological role, has antibacterial activity. In Boana raniceps (Chaco tree frog), this protein is Raniseptin-7.